The chain runs to 62 residues: FCYLPDDPGVCKAHIPRFYYNPASNKCKNFIYGGCGGNANNFETRAECRHTCVASGKGGPRP.

In terms of domain architecture, BPTI/Kunitz inhibitor spans Cys-2 to Cys-52. 3 cysteine pairs are disulfide-bonded: Cys-2–Cys-52, Cys-11–Cys-35, and Cys-27–Cys-48.

This sequence belongs to the venom Kunitz-type family. As to expression, expressed by the venom gland.

It localises to the secreted. Its function is as follows. Serine protease inhibitor that inhibits trypsin. The recombinant protein also barely blocks voltage-gated potassium channel Kv1.3/KCNA3 (3.70% inhibition at 60 nM of toxin). This chain is Kunitz-type serine protease inhibitor, found in Eristicophis macmahoni (Leaf-nosed viper).